Reading from the N-terminus, the 262-residue chain is Type III pantothenate kinase (262 aa).

ATP is bound at residue 7-14 (DIGNTRLK). Residues tyrosine 96 and 103–106 (GSDR) each bind substrate. Aspartate 105 functions as the Proton acceptor in the catalytic mechanism. Threonine 137 lines the ATP pocket. Residue threonine 187 coordinates substrate.

This sequence belongs to the type III pantothenate kinase family. In terms of assembly, homodimer. NH4(+) is required as a cofactor. The cofactor is K(+).

Its subcellular location is the cytoplasm. The catalysed reaction is (R)-pantothenate + ATP = (R)-4'-phosphopantothenate + ADP + H(+). The protein operates within cofactor biosynthesis; coenzyme A biosynthesis; CoA from (R)-pantothenate: step 1/5. Catalyzes the phosphorylation of pantothenate (Pan), the first step in CoA biosynthesis. The protein is Type III pantothenate kinase of Leptothrix cholodnii (strain ATCC 51168 / LMG 8142 / SP-6) (Leptothrix discophora (strain SP-6)).